The following is a 664-amino-acid chain: Kinesin-like protein KIF2B (664 aa).

Thr125 bears the Phosphothreonine; by PLK1 mark. A coiled-coil region spans residues 149–177 (CLREIEKLQKQREKRRRLQLEIRARRALD). The residue at position 204 (Ser204) is a Phosphoserine; by PLK1. Residues 213–543 (RICVCVRKRP…LRYANRVKEL (331 aa)) enclose the Kinesin motor domain. ATP is bound at residue 303 to 310 (GQTGSGKT). A disordered region spans residues 583–607 (VQKEEEKESDELTSTKEPAASWSRS). The stretch at 642 to 663 (VLTEIQKKLQLLRDDLQKKSQA) forms a coiled coil.

This sequence belongs to the TRAFAC class myosin-kinesin ATPase superfamily. Kinesin family. MCAK/KIF2 subfamily. In terms of processing, phosphorylation at Thr-125 by PLK1 is required for activity in the correction of kinetochore-microtubules attachment errors, while phosphorylation at Ser-204 also by PLK1 is required for the kinetochore localization and activity in prometaphase.

It localises to the cytoplasm. It is found in the cytoskeleton. The protein resides in the microtubule organizing center. Its subcellular location is the centrosome. The protein localises to the spindle. It localises to the chromosome. It is found in the centromere. The protein resides in the kinetochore. Functionally, plus end-directed microtubule-dependent motor required for spindle assembly and chromosome movement. Has microtubule depolymerization activity. Plays a role in chromosome congression. The sequence is that of Kinesin-like protein KIF2B from Rattus norvegicus (Rat).